We begin with the raw amino-acid sequence, 795 residues long: Histidine biosynthesis trifunctional protein (795 aa).

Residues 1 to 225 (MLPVVPVFNA…VVRQGGSGSF (225 aa)) are phosphoribosyl-AMP cyclohydrolase. The tract at residues 226–308 (CHLETESCFG…FYFAMARLVA (83 aa)) is phosphoribosyl-ATP pyrophosphohydrolase. Residues 309–795 (NGVSLEDVER…KLGLLPSGFE (487 aa)) are histidinol dehydrogenase. Glutamine 614 and histidine 617 together coordinate Zn(2+). Catalysis depends on residues glutamate 683 and histidine 684. Positions 717 and 776 each coordinate Zn(2+).

This sequence in the C-terminal section; belongs to the histidinol dehydrogenase family. It depends on Zn(2+) as a cofactor.

It catalyses the reaction 1-(5-phospho-beta-D-ribosyl)-5'-AMP + H2O = 1-(5-phospho-beta-D-ribosyl)-5-[(5-phospho-beta-D-ribosylamino)methylideneamino]imidazole-4-carboxamide. It carries out the reaction 1-(5-phospho-beta-D-ribosyl)-ATP + H2O = 1-(5-phospho-beta-D-ribosyl)-5'-AMP + diphosphate + H(+). The catalysed reaction is L-histidinol + 2 NAD(+) + H2O = L-histidine + 2 NADH + 3 H(+). It participates in amino-acid biosynthesis; L-histidine biosynthesis; L-histidine from 5-phospho-alpha-D-ribose 1-diphosphate: step 2/9. The protein operates within amino-acid biosynthesis; L-histidine biosynthesis; L-histidine from 5-phospho-alpha-D-ribose 1-diphosphate: step 3/9. Its pathway is amino-acid biosynthesis; L-histidine biosynthesis; L-histidine from 5-phospho-alpha-D-ribose 1-diphosphate: step 9/9. In Kluyveromyces lactis (strain ATCC 8585 / CBS 2359 / DSM 70799 / NBRC 1267 / NRRL Y-1140 / WM37) (Yeast), this protein is Histidine biosynthesis trifunctional protein (HIS4).